Consider the following 518-residue polypeptide: Membrane-bound lytic murein transglycosylase F (518 aa).

Residues 1–21 (MKKLKINYLFIGILALLLAVA) form the signal peptide. Residues 22 to 269 (LWPSIPWFGK…RIEEKYLGHG (248 aa)) form a non-LT domain region. Residues 270-518 (DDFDYVDTRT…SRKGSEEKQN (249 aa)) are LT domain. Glutamate 314 is an active-site residue.

It in the N-terminal section; belongs to the bacterial solute-binding protein 3 family. This sequence in the C-terminal section; belongs to the transglycosylase Slt family.

The protein resides in the cell outer membrane. It carries out the reaction Exolytic cleavage of the (1-&gt;4)-beta-glycosidic linkage between N-acetylmuramic acid (MurNAc) and N-acetylglucosamine (GlcNAc) residues in peptidoglycan, from either the reducing or the non-reducing ends of the peptidoglycan chains, with concomitant formation of a 1,6-anhydrobond in the MurNAc residue.. Murein-degrading enzyme that degrades murein glycan strands and insoluble, high-molecular weight murein sacculi, with the concomitant formation of a 1,6-anhydromuramoyl product. Lytic transglycosylases (LTs) play an integral role in the metabolism of the peptidoglycan (PG) sacculus. Their lytic action creates space within the PG sacculus to allow for its expansion as well as for the insertion of various structures such as secretion systems and flagella. This chain is Membrane-bound lytic murein transglycosylase F, found in Shigella dysenteriae serotype 1 (strain Sd197).